Here is a 92-residue protein sequence, read N- to C-terminus: C-C motif chemokine 4 (92 aa).

Residues 1-23 form the signal peptide; the sequence is MKLCVSAFSLLLLVAAFCDSVLS. Intrachain disulfides connect Cys34–Cys58 and Cys35–Cys74.

This sequence belongs to the intercrine beta (chemokine CC) family. In terms of assembly, homodimer.

It localises to the secreted. Monokine with inflammatory and chemokinetic properties. In Rattus norvegicus (Rat), this protein is C-C motif chemokine 4 (Ccl4).